A 335-amino-acid chain; its full sequence is Glycerol-3-phosphate dehydrogenase [NAD(P)+] (335 aa).

Residues Ser10, Phe11, Arg31, and Lys105 each coordinate NADPH. The sn-glycerol 3-phosphate site is built by Lys105, Gly136, and Ser138. NADPH is bound at residue Ala140. Residues Lys191, Asp244, Ser254, Arg255, and Asn256 each coordinate sn-glycerol 3-phosphate. Lys191 (proton acceptor) is an active-site residue. Arg255 contributes to the NADPH binding site. 2 residues coordinate NADPH: Val279 and Glu281.

It belongs to the NAD-dependent glycerol-3-phosphate dehydrogenase family.

Its subcellular location is the cytoplasm. The catalysed reaction is sn-glycerol 3-phosphate + NAD(+) = dihydroxyacetone phosphate + NADH + H(+). The enzyme catalyses sn-glycerol 3-phosphate + NADP(+) = dihydroxyacetone phosphate + NADPH + H(+). The protein operates within membrane lipid metabolism; glycerophospholipid metabolism. Its function is as follows. Catalyzes the reduction of the glycolytic intermediate dihydroxyacetone phosphate (DHAP) to sn-glycerol 3-phosphate (G3P), the key precursor for phospholipid synthesis. The polypeptide is Glycerol-3-phosphate dehydrogenase [NAD(P)+] (Leptospira interrogans serogroup Icterohaemorrhagiae serovar copenhageni (strain Fiocruz L1-130)).